The sequence spans 395 residues: Formate-dependent phosphoribosylglycinamide formyltransferase (395 aa).

Residues 22-23 (EL) and Glu82 contribute to the N(1)-(5-phospho-beta-D-ribosyl)glycinamide site. ATP is bound by residues Arg115, Lys156, 161 to 166 (SSGKGQ), 196 to 199 (EGFI), and Glu204. The ATP-grasp domain maps to 120–309 (RLAAETLGLP…EFALHARAIL (190 aa)). Positions 268 and 280 each coordinate Mg(2+). N(1)-(5-phospho-beta-D-ribosyl)glycinamide is bound by residues Asp287, Lys356, and 363 to 364 (RR).

Belongs to the PurK/PurT family. In terms of assembly, homodimer.

It carries out the reaction N(1)-(5-phospho-beta-D-ribosyl)glycinamide + formate + ATP = N(2)-formyl-N(1)-(5-phospho-beta-D-ribosyl)glycinamide + ADP + phosphate + H(+). The protein operates within purine metabolism; IMP biosynthesis via de novo pathway; N(2)-formyl-N(1)-(5-phospho-D-ribosyl)glycinamide from N(1)-(5-phospho-D-ribosyl)glycinamide (formate route): step 1/1. Its function is as follows. Involved in the de novo purine biosynthesis. Catalyzes the transfer of formate to 5-phospho-ribosyl-glycinamide (GAR), producing 5-phospho-ribosyl-N-formylglycinamide (FGAR). Formate is provided by PurU via hydrolysis of 10-formyl-tetrahydrofolate. The sequence is that of Formate-dependent phosphoribosylglycinamide formyltransferase from Stenotrophomonas maltophilia (strain R551-3).